A 156-amino-acid polypeptide reads, in one-letter code: ATP synthase subunit b (156 aa).

A helical transmembrane segment spans residues 7 to 26 (ILGQAIAFVLFVWFCMKYVW).

This sequence belongs to the ATPase B chain family. As to quaternary structure, F-type ATPases have 2 components, F(1) - the catalytic core - and F(0) - the membrane proton channel. F(1) has five subunits: alpha(3), beta(3), gamma(1), delta(1), epsilon(1). F(0) has three main subunits: a(1), b(2) and c(10-14). The alpha and beta chains form an alternating ring which encloses part of the gamma chain. F(1) is attached to F(0) by a central stalk formed by the gamma and epsilon chains, while a peripheral stalk is formed by the delta and b chains.

Its subcellular location is the cell inner membrane. F(1)F(0) ATP synthase produces ATP from ADP in the presence of a proton or sodium gradient. F-type ATPases consist of two structural domains, F(1) containing the extramembraneous catalytic core and F(0) containing the membrane proton channel, linked together by a central stalk and a peripheral stalk. During catalysis, ATP synthesis in the catalytic domain of F(1) is coupled via a rotary mechanism of the central stalk subunits to proton translocation. In terms of biological role, component of the F(0) channel, it forms part of the peripheral stalk, linking F(1) to F(0). In Pectobacterium atrosepticum (strain SCRI 1043 / ATCC BAA-672) (Erwinia carotovora subsp. atroseptica), this protein is ATP synthase subunit b.